A 318-amino-acid polypeptide reads, in one-letter code: Putative enoyl-CoA hydratase EchA13 (318 aa).

Positions 90 to 110 are disordered; sequence LGSADDIRERSPGPDQHPSYR.

It belongs to the enoyl-CoA hydratase/isomerase family.

The chain is Putative enoyl-CoA hydratase EchA13 (echA13) from Mycobacterium tuberculosis (strain ATCC 25618 / H37Rv).